The primary structure comprises 106 residues: Phosphoribosyl-ATP pyrophosphatase (106 aa).

This sequence belongs to the PRA-PH family.

It is found in the cytoplasm. It catalyses the reaction 1-(5-phospho-beta-D-ribosyl)-ATP + H2O = 1-(5-phospho-beta-D-ribosyl)-5'-AMP + diphosphate + H(+). It functions in the pathway amino-acid biosynthesis; L-histidine biosynthesis; L-histidine from 5-phospho-alpha-D-ribose 1-diphosphate: step 2/9. The polypeptide is Phosphoribosyl-ATP pyrophosphatase (Methylobacillus flagellatus (strain ATCC 51484 / DSM 6875 / VKM B-1610 / KT)).